The following is a 264-amino-acid chain: MKPTTIASLQKCKQDKKRFATITAYDYSFAKLFADEGINVMLVGDSLGMTVQGHDSTLPVTVADIAYHTAAVRRGAPNCLLLADLPFMAYATPEQAFENAATVMRAGANMVKIEGGEWLVETVQMLTERAVPVCGHLGLTPQSVNIFGGYKVQGRGDEAGDRLLSDALALEAAGAQLLVLECVPVELAKRITEALAIPVIGIGAGNVTDGQILVMHDAFGITGGHIPKFAKNFLAETGDIRAAVRQYMAEVESGVYPGEEHSFH.

Residues Asp45 and Asp84 each contribute to the Mg(2+) site. 3-methyl-2-oxobutanoate is bound by residues Asp45–Ser46, Asp84, and Lys112. Mg(2+) is bound at residue Glu114. Glu181 functions as the Proton acceptor in the catalytic mechanism.

It belongs to the PanB family. Homodecamer; pentamer of dimers. Mg(2+) is required as a cofactor.

The protein localises to the cytoplasm. It carries out the reaction 3-methyl-2-oxobutanoate + (6R)-5,10-methylene-5,6,7,8-tetrahydrofolate + H2O = 2-dehydropantoate + (6S)-5,6,7,8-tetrahydrofolate. Its pathway is cofactor biosynthesis; (R)-pantothenate biosynthesis; (R)-pantoate from 3-methyl-2-oxobutanoate: step 1/2. Its function is as follows. Catalyzes the reversible reaction in which hydroxymethyl group from 5,10-methylenetetrahydrofolate is transferred onto alpha-ketoisovalerate to form ketopantoate. This is 3-methyl-2-oxobutanoate hydroxymethyltransferase from Escherichia coli O81 (strain ED1a).